Here is a 316-residue protein sequence, read N- to C-terminus: Methionyl-tRNA formyltransferase (316 aa).

113–116 is a (6S)-5,6,7,8-tetrahydrofolate binding site; sequence SLLP.

This sequence belongs to the Fmt family.

It catalyses the reaction L-methionyl-tRNA(fMet) + (6R)-10-formyltetrahydrofolate = N-formyl-L-methionyl-tRNA(fMet) + (6S)-5,6,7,8-tetrahydrofolate + H(+). Functionally, attaches a formyl group to the free amino group of methionyl-tRNA(fMet). The formyl group appears to play a dual role in the initiator identity of N-formylmethionyl-tRNA by promoting its recognition by IF2 and preventing the misappropriation of this tRNA by the elongation apparatus. The polypeptide is Methionyl-tRNA formyltransferase (Proteus mirabilis (strain HI4320)).